The sequence spans 380 residues: Deoxyguanosinetriphosphate triphosphohydrolase-like protein (380 aa).

Positions 79–196 (RLTHTLEVQQ…VDAADALAYT (118 aa)) constitute an HD domain.

The protein belongs to the dGTPase family. Type 2 subfamily.

This chain is Deoxyguanosinetriphosphate triphosphohydrolase-like protein, found in Deinococcus deserti (strain DSM 17065 / CIP 109153 / LMG 22923 / VCD115).